The sequence spans 207 residues: Large ribosomal subunit protein uL4 (207 aa).

The segment at H49 to I78 is disordered.

The protein belongs to the universal ribosomal protein uL4 family. In terms of assembly, part of the 50S ribosomal subunit.

Functionally, one of the primary rRNA binding proteins, this protein initially binds near the 5'-end of the 23S rRNA. It is important during the early stages of 50S assembly. It makes multiple contacts with different domains of the 23S rRNA in the assembled 50S subunit and ribosome. Forms part of the polypeptide exit tunnel. The polypeptide is Large ribosomal subunit protein uL4 (Streptococcus agalactiae serotype Ia (strain ATCC 27591 / A909 / CDC SS700)).